The following is a 339-amino-acid chain: Cilia- and flagella-associated protein 36 (339 aa).

Coiled-coil stretches lie at residues 142–188 and 255–330; these read ISDL…ENKQ and NLSQ…EVIL. Disordered stretches follow at residues 177 to 212 and 281 to 318; these read NLTL…EKQP and KKQE…QRRK. Positions 187–200 are enriched in polar residues; that stretch reads KQSSGSERTPNNTE. Residues 281–313 are compositionally biased toward basic and acidic residues; it reads KKQESKKMAQNSEEHEEKATCSKQEMTEEEKKS.

This sequence belongs to the CFAP36 family.

The protein resides in the nucleus. It is found in the cytoplasm. The protein localises to the cell projection. It localises to the cilium. Its subcellular location is the flagellum. This is Cilia- and flagella-associated protein 36 from Xenopus tropicalis (Western clawed frog).